The sequence spans 395 residues: Elongation factor Tu (395 aa).

One can recognise a tr-type G domain in the interval 10-204 (KSHVNVGTLG…AVDEYIPTPE (195 aa)). Residues 19 to 26 (GHVDHGKT) are G1. 19–26 (GHVDHGKT) provides a ligand contact to GTP. Threonine 26 is a Mg(2+) binding site. The tract at residues 60 to 64 (GITIS) is G2. Positions 81 to 84 (DCPG) are G3. Residues 81-85 (DCPGH) and 136-139 (NKTD) contribute to the GTP site. The tract at residues 136 to 139 (NKTD) is G4. Residues 174-176 (SAL) are G5.

It belongs to the TRAFAC class translation factor GTPase superfamily. Classic translation factor GTPase family. EF-Tu/EF-1A subfamily. In terms of assembly, monomer.

It localises to the cytoplasm. The enzyme catalyses GTP + H2O = GDP + phosphate + H(+). In terms of biological role, GTP hydrolase that promotes the GTP-dependent binding of aminoacyl-tRNA to the A-site of ribosomes during protein biosynthesis. This chain is Elongation factor Tu, found in Oceanobacillus iheyensis (strain DSM 14371 / CIP 107618 / JCM 11309 / KCTC 3954 / HTE831).